A 309-amino-acid polypeptide reads, in one-letter code: Protoheme IX farnesyltransferase (309 aa).

A run of 9 helical transmembrane segments spans residues 35–55 (IGIV…ALYF), 64–84 (LHIV…SCSI), 114–134 (VLWL…MTTV), 135–155 (TAAI…TMWS), 161–181 (LNTV…WTAV), 187–207 (VVPL…FLAL), 236–256 (IVVW…LGVP), 257–277 (FLTV…YGFK), and 289–309 (FIYS…ATLW).

This sequence belongs to the UbiA prenyltransferase family. Protoheme IX farnesyltransferase subfamily. Interacts with CtaA.

The protein resides in the cell membrane. The catalysed reaction is heme b + (2E,6E)-farnesyl diphosphate + H2O = Fe(II)-heme o + diphosphate. It functions in the pathway porphyrin-containing compound metabolism; heme O biosynthesis; heme O from protoheme: step 1/1. Functionally, converts heme B (protoheme IX) to heme O by substitution of the vinyl group on carbon 2 of heme B porphyrin ring with a hydroxyethyl farnesyl side group. This is Protoheme IX farnesyltransferase from Geobacillus sp. (strain WCH70).